The sequence spans 374 residues: 4-hydroxy-3-methylbut-2-en-1-yl diphosphate synthase (flavodoxin) (374 aa).

The [4Fe-4S] cluster site is built by C268, C271, C303, and E310.

Belongs to the IspG family. Requires [4Fe-4S] cluster as cofactor.

It catalyses the reaction (2E)-4-hydroxy-3-methylbut-2-enyl diphosphate + oxidized [flavodoxin] + H2O + 2 H(+) = 2-C-methyl-D-erythritol 2,4-cyclic diphosphate + reduced [flavodoxin]. Its pathway is isoprenoid biosynthesis; isopentenyl diphosphate biosynthesis via DXP pathway; isopentenyl diphosphate from 1-deoxy-D-xylulose 5-phosphate: step 5/6. Functionally, converts 2C-methyl-D-erythritol 2,4-cyclodiphosphate (ME-2,4cPP) into 1-hydroxy-2-methyl-2-(E)-butenyl 4-diphosphate. This Geobacillus thermodenitrificans (strain NG80-2) protein is 4-hydroxy-3-methylbut-2-en-1-yl diphosphate synthase (flavodoxin).